A 256-amino-acid polypeptide reads, in one-letter code: 1-(5-phosphoribosyl)-5-[(5-phosphoribosylamino)methylideneamino] imidazole-4-carboxamide isomerase (256 aa).

The active-site Proton acceptor is the D8. D130 (proton donor) is an active-site residue.

The protein belongs to the HisA/HisF family.

The protein resides in the cytoplasm. It carries out the reaction 1-(5-phospho-beta-D-ribosyl)-5-[(5-phospho-beta-D-ribosylamino)methylideneamino]imidazole-4-carboxamide = 5-[(5-phospho-1-deoxy-D-ribulos-1-ylimino)methylamino]-1-(5-phospho-beta-D-ribosyl)imidazole-4-carboxamide. The protein operates within amino-acid biosynthesis; L-histidine biosynthesis; L-histidine from 5-phospho-alpha-D-ribose 1-diphosphate: step 4/9. The polypeptide is 1-(5-phosphoribosyl)-5-[(5-phosphoribosylamino)methylideneamino] imidazole-4-carboxamide isomerase (Chlorobium luteolum (strain DSM 273 / BCRC 81028 / 2530) (Pelodictyon luteolum)).